A 359-amino-acid chain; its full sequence is MDSVALYCTAGLIAGAVYWFICVLGPAERKGKRASDLSGGSISAEKVKDNYNQYWSFFRKPKEIESAEKVPDFVDTFYNLVTDIYEWGWGQSFHFSPHVPGKSDKDATRIHEEMAVDLIKVKPGQKILDAGCGVGGPMRAIAAHSKAQVTGITINEYQVQRAKLHNKKAGLDSLCNVVCGNFLKMPFDENTFDGAYSIEATCHAPKLEEVYSEIFRVMKPGSLFVSYEWVTTEKYRDDDEEHKDVIQGIERGDALPGLRSYADIAVTAKKVGFEVVKEKDLAKPPSKPWWNRLKMGRIAYWRNHVVVVILSAIGVAPKGTVDVHKMLFKTADYLTRGGETGIFSPMHMILCRKPEKASE.

Residues 4 to 24 (VALYCTAGLIAGAVYWFICVL) traverse the membrane as a helical segment.

Belongs to the class I-like SAM-binding methyltransferase superfamily. Erg6/SMT family.

The protein resides in the membrane. The catalysed reaction is 24-methylidenelophenol + S-adenosyl-L-methionine = (Z)-24-ethylidenelophenol + S-adenosyl-L-homocysteine + H(+). It functions in the pathway steroid biosynthesis; sterol biosynthesis. Functionally, catalyzes the methyl transfer from S-adenosyl-methionine to the methylene group of 24-methylene lophenol to form 24-ethylidene lophenol. This is 24-methylenesterol C-methyltransferase 3 (SMT3) from Arabidopsis thaliana (Mouse-ear cress).